The primary structure comprises 353 residues: Protein RecA (353 aa).

An ATP-binding site is contributed by Gly-67 to Thr-74.

This sequence belongs to the RecA family.

The protein resides in the cytoplasm. Functionally, can catalyze the hydrolysis of ATP in the presence of single-stranded DNA, the ATP-dependent uptake of single-stranded DNA by duplex DNA, and the ATP-dependent hybridization of homologous single-stranded DNAs. It interacts with LexA causing its activation and leading to its autocatalytic cleavage. The protein is Protein RecA of Salmonella paratyphi A (strain ATCC 9150 / SARB42).